Consider the following 511-residue polypeptide: Cytochrome P450 71A6 (511 aa).

2 helical membrane-spanning segments follow: residues 1–15 (ILIA…LFFL) and 61–77 (VMQL…ASSP). 3 N-linked (GlcNAc...) asparagine glycosylation sites follow: Asn90, Asn96, and Asn167. Cys450 contributes to the heme binding site.

The protein belongs to the cytochrome P450 family. Heme is required as a cofactor.

Its subcellular location is the membrane. The protein is Cytochrome P450 71A6 (CYP71A6) of Nepeta racemosa (Catmint).